The following is a 437-amino-acid chain: 2-methylisoborneol synthase (437 aa).

The interval 32-125 (AHDSEATVGG…IPGLYHHPVP (94 aa)) is disordered. Over residues 59–73 (PPSPAAPPTDVPAPE) the composition is skewed to pro residues. The Mg(2+) site is built by aspartate 194, aspartate 195, glutamate 199, asparagine 342, serine 346, and glutamate 350.

It belongs to the terpene synthase family. 2-methylisoborneol synthase subfamily. Requires Mg(2+) as cofactor.

The catalysed reaction is (E)-2-methylgeranyl diphosphate + H2O = 2-methylisoborneol + diphosphate. Functionally, catalyzes the cyclization of 2-methylgeranyl diphosphate (2-MeGPP) to 2-methylisoborneol (2-MIB), which likely involves the intermediacy of 2-methyllinalyl diphosphate. This is 2-methylisoborneol synthase from Streptomyces griseus.